The chain runs to 338 residues: Putative peptide import ATP-binding protein BOV_A0348 (338 aa).

The region spanning 10-263 (KGLRTVFRTR…PRHPYTMGLL (254 aa)) is the ABC transporter domain. Residue 43–50 (GESGSGKS) participates in ATP binding.

The protein belongs to the ABC transporter superfamily. As to quaternary structure, the complex is composed of two ATP-binding proteins (BOV_A0347 and BOV_A0348), two transmembrane proteins (BOV_A0350 and BOV_A0351) and a solute-binding protein (BOV_A0352).

It localises to the cell inner membrane. Probably part of an ABC transporter complex that could be involved in peptide import. Probably responsible for energy coupling to the transport system. In Brucella ovis (strain ATCC 25840 / 63/290 / NCTC 10512), this protein is Putative peptide import ATP-binding protein BOV_A0348.